We begin with the raw amino-acid sequence, 447 residues long: Protein chibby homolog 2 (447 aa).

Phosphoserine is present on residues Ser41, Ser85, Ser88, Ser96, Ser123, Ser143, Ser147, and Ser149. Positions 164-197 (EYLLQEENKSLRDENRALRDENKALRKENKILQV) form a coiled coil. Disordered stretches follow at residues 208 to 244 (HEESQTSSPLLHKDTTSQEVVKKDNATLPAQRSKENT) and 266 to 320 (WAQA…EDSK). Phosphoserine is present on residues Ser211 and Ser224. Positions 218–232 (LHKDTTSQEVVKKDN) are enriched in basic and acidic residues. Positions 237 to 264 (AQRSKENTLQFIREENRALQQLLEQRQA) form a coiled coil. The segment covering 266 to 276 (WAQAEESATSA) has biased composition (low complexity). Phosphoserine occurs at positions 272 and 275. The segment covering 277-290 (EEGKPTSSPKEEPH) has biased composition (basic and acidic residues). Residues Ser333 and Ser336 each carry the phosphoserine modification. Residues 354 to 412 (LQLLREMNQALQALREENRLLQEENRALHAMREEHRVFQEENKALWENNKLKLQQRLVI) adopt a coiled-coil conformation.

It belongs to the chibby family. SPERT subfamily. In terms of assembly, homodimer. Binds to NEK1.

The sequence is that of Protein chibby homolog 2 (Cby2) from Rattus norvegicus (Rat).